The following is a 96-amino-acid chain: Putative toxin Y4kP (96 aa).

This sequence belongs to the RelE toxin family.

Toxic component of a type II toxin-antitoxin (TA) system. In Sinorhizobium fredii (strain NBRC 101917 / NGR234), this protein is Putative toxin Y4kP.